The sequence spans 520 residues: GMP synthase [glutamine-hydrolyzing] (520 aa).

Residues 9-202 form the Glutamine amidotransferase type-1 domain; that stretch reads KILILDFGSQ…VRKICGCSGK (194 aa). Cysteine 86 acts as the Nucleophile in catalysis. Active-site residues include histidine 176 and glutamate 178. The GMPS ATP-PPase domain maps to 203 to 395; it reads WTPGQIIEDA…LGLPHQMVWR (193 aa). Residue 230–236 coordinates ATP; sequence SGGVDSS.

As to quaternary structure, homodimer.

The enzyme catalyses XMP + L-glutamine + ATP + H2O = GMP + L-glutamate + AMP + diphosphate + 2 H(+). It functions in the pathway purine metabolism; GMP biosynthesis; GMP from XMP (L-Gln route): step 1/1. Functionally, catalyzes the synthesis of GMP from XMP. This chain is GMP synthase [glutamine-hydrolyzing], found in Geotalea daltonii (strain DSM 22248 / JCM 15807 / FRC-32) (Geobacter daltonii).